Consider the following 394-residue polypeptide: L-lactate 2-monooxygenase (394 aa).

An FMN hydroxy acid dehydrogenase domain is found at 19 to 394 (VAPTLPMSYA…LTIDALRPTR (376 aa)). Tyr-45 provides a ligand contact to a 2-oxocarboxylate. FMN-binding positions include 98-100 (PIG), Ser-129, and Gln-151. Residue Tyr-153 coordinates a 2-oxocarboxylate. An FMN-binding site is contributed by Thr-179. Arg-188 provides a ligand contact to a 2-oxocarboxylate. Lys-267 serves as a coordination point for FMN. The Proton acceptor role is filled by His-291. Arg-294 provides a ligand contact to a 2-oxocarboxylate. FMN contacts are provided by residues 321–325 (DSGIR) and Arg-345.

The protein belongs to the FMN-dependent alpha-hydroxy acid dehydrogenase family. Homotetramer. Requires FMN as cofactor.

The catalysed reaction is (S)-lactate + O2 = acetate + CO2 + H2O. Its function is as follows. Catalyzes the oxidative decarboxylation of (S)-lactate (L-lactate) to acetate and carbon dioxide. Its physiological role remains unknown. The chain is L-lactate 2-monooxygenase from Mycolicibacterium smegmatis (Mycobacterium smegmatis).